The chain runs to 1221 residues: Reverse gyrase subunit B (1221 aa).

An RG N-terminal-type zinc finger spans residues 56–97; the sequence is NEPVAIFGSSCVLCGGDCSSVRLTSRIGICERCLPVDTETLR. Residues Cys-66, Cys-69, Cys-85, and Cys-88 each contribute to the Zn(2+) site. ATP-binding positions include Gln-161 and 178–185; that span reads APTGTGKT. In terms of domain architecture, Helicase ATP-binding spans 165–400; sequence TRRLVKGCSF…AVVRELFDFE (236 aa). Residues 284–287 carry the DEAD box motif; that stretch reads DDVD. Positions 424-600 constitute a Helicase C-terminal domain; that stretch reads AVERIVRKAG…PLSLNTLMKL (177 aa). The Toprim domain occupies 779 to 935; it reads SALMIVESPN…QVYRTEFHEV (157 aa). Glu-785 lines the Mg(2+) pocket. The RG C-terminal-type zinc finger occupies 856-882; the sequence is LGRCSECGEQVVGSEECPNCGGEVELK. Cys-859, Cys-862, Cys-872, and Cys-875 together coordinate Zn(2+). Mg(2+) is bound at residue Asp-904. In terms of domain architecture, Topo IA-type catalytic spans 953 to 1221; the sequence is DAGRVSAQIL…MLHLAGVSGR (269 aa).

It in the C-terminal section; belongs to the type IA topoisomerase family. This sequence in the N-terminal section; belongs to the DEAD box helicase family. DDVD subfamily. As to quaternary structure, heterodimer of an RgyrA and RgyrB subunit. The topoisomerase domain is shared between the two subunits. Zn(2+) serves as cofactor. Mg(2+) is required as a cofactor. In terms of processing, the N-terminus is partially blocked.

It is found in the cytoplasm. The enzyme catalyses ATP + H2O = ADP + phosphate + H(+). Its function is as follows. Modifies the topological state of DNA by introducing positive supercoils in an ATP-dependent process; dATP also allows positive supercoiling. Increases the linking number in steps of +1. Only this subunit binds ATP, it does so in a DNA- and RgyA-independent manner. Hydrolyzes ATP only in the presence of DNA. The RgyA subunit transiently cleaves a single DNA strand and remains covalently bound to the 5' DNA end probably through a tyrosine residue. It changes linking number in steps of one, and nicks DNA preferentially at 5'-CNNN | 3'-sites with a strong preference for 4 pyrimidine residues. There are about 1000 heterodimers per cell. May be involved in rewinding the DNA strands in the regions of the chromosome that have opened up to allow transcription or replication. Functionally, this subunit expressed in E.coli only has DNA-dependent ATPase activity at 80 degrees Celsius. Reverse gyrase activity is reconstituted after incubation at 80 degrees Celsius for 5 minutes, positive supercoiling requires ATP and Mg(2+). In the presence of ATP it binds and nicks substrate but does not make closed product. The chain is Reverse gyrase subunit B from Methanopyrus kandleri (strain AV19 / DSM 6324 / JCM 9639 / NBRC 100938).